The following is a 63-amino-acid chain: UPF0434 protein GDI0182/Gdia_2252 (63 aa).

This sequence belongs to the UPF0434 family.

In Gluconacetobacter diazotrophicus (strain ATCC 49037 / DSM 5601 / CCUG 37298 / CIP 103539 / LMG 7603 / PAl5), this protein is UPF0434 protein GDI0182/Gdia_2252.